Reading from the N-terminus, the 156-residue chain is Arginine repressor (156 aa).

The protein belongs to the ArgR family.

Its subcellular location is the cytoplasm. Its pathway is amino-acid biosynthesis; L-arginine biosynthesis [regulation]. Regulates arginine biosynthesis genes. This is Arginine repressor from Citrobacter koseri (strain ATCC BAA-895 / CDC 4225-83 / SGSC4696).